Reading from the N-terminus, the 359-residue chain is D-alanine--D-alanine ligase (359 aa).

Positions 141–346 (KRIFKEAGLP…YSTLLDELIN (206 aa)) constitute an ATP-grasp domain. 172 to 227 (IEHLGYPCFVKPANLGSSVGITKVHNEEELPGALKLAAKYDRKLLIERGIDAREIE) is a binding site for ATP. Positions 299, 313, and 315 each coordinate Mg(2+).

This sequence belongs to the D-alanine--D-alanine ligase family. Mg(2+) is required as a cofactor. Mn(2+) serves as cofactor.

It is found in the cytoplasm. The catalysed reaction is 2 D-alanine + ATP = D-alanyl-D-alanine + ADP + phosphate + H(+). The protein operates within cell wall biogenesis; peptidoglycan biosynthesis. Its function is as follows. Cell wall formation. The sequence is that of D-alanine--D-alanine ligase from Thermoanaerobacter pseudethanolicus (strain ATCC 33223 / 39E) (Clostridium thermohydrosulfuricum).